The following is a 280-amino-acid chain: Protein HEAT-INDUCED TAS1 TARGET 4 (280 aa).

It belongs to the heat induced plant HTT protein family. As to expression, expressed in seedlings, leaves, stems, inflorescences and siliques.

Its subcellular location is the cytoplasm. It is found in the nucleus. Its function is as follows. Mediates both basal and acquired thermotolerance. In Arabidopsis thaliana (Mouse-ear cress), this protein is Protein HEAT-INDUCED TAS1 TARGET 4.